The primary structure comprises 620 residues: MDSHTLLQALIYLGSAALIVPIAVRLGLGSVLGYLIAGCIIGPWGLRLVTDAESILHFAEIGVVLMLFVIGLELDPQRLWKLRASVFGGGALQMVVCGGLIGLFCMFLGLRWQVAELIGMTLALSSTAIAMQAMNERNLTVSQVGRSAFAVLLFQDIAAIPLVAMIPLLAASGASTTLGAFALSALKVAGALALVVLLGRYVTRPALRFVARSGLREVFSAVALFLVFGFGLLLEEVGLSMAMGAFLAGVLLASSEYRHALESDIEPFKGLLLGLFFIGVGMSIDFGTLVENPLRILLLLAGFLAIKIVMLWLVARTLGVPAKQRRWFAVLLGQGSEFAFVVFGAAQMADVLEPEWAKALTLAVALSMAATPIFLVLLTRMEKTATGEAREADEIDEEQPRVIVAGFGRFGQIAGRLLLSSGVKMVVLDHDPDHIETLRKFGMKVFYGDATRMDLLESAGAAKAEVLINAIDDPQTNLQLSELVKTHFPHLQIIARARDVDHYIRLRQAGVAMPERETFEGALKSGRQALEALGLGRYEARERADLFCHFNTRMVEEMAKGENDPLSRAAAYKRTSAMLSEIITEDREHLSLIQRHGWQGTAEGKHSGKAADEPEVKPSI.

At 1-3 (MDS) the chain is on the periplasmic side. The chain crosses the membrane as a helical span at residues 4–24 (HTLLQALIYLGSAALIVPIAV). Position 25 (R25) is a topological domain, cytoplasmic. A helical membrane pass occupies residues 26-46 (LGLGSVLGYLIAGCIIGPWGL). Over 47 to 53 (RLVTDAE) the chain is Periplasmic. A helical transmembrane segment spans residues 54–74 (SILHFAEIGVVLMLFVIGLEL). At 75-89 (DPQRLWKLRASVFGG) the chain is on the cytoplasmic side. The helical transmembrane segment at 90 to 110 (GALQMVVCGGLIGLFCMFLGL) threads the bilayer. Topologically, residues 111-113 (RWQ) are periplasmic. The helical transmembrane segment at 114–134 (VAELIGMTLALSSTAIAMQAM) threads the bilayer. Residues 135–148 (NERNLTVSQVGRSA) lie on the Cytoplasmic side of the membrane. A helical membrane pass occupies residues 149–169 (FAVLLFQDIAAIPLVAMIPLL). Residues 170–177 (AASGASTT) lie on the Periplasmic side of the membrane. The chain crosses the membrane as a helical span at residues 178–198 (LGAFALSALKVAGALALVVLL). The Cytoplasmic segment spans residues 199–213 (GRYVTRPALRFVARS). The chain crosses the membrane as a helical span at residues 214–233 (GLREVFSAVALFLVFGFGLL). Over 234–236 (LEE) the chain is Periplasmic. Residues 237–254 (VGLSMAMGAFLAGVLLAS) traverse the membrane as a helical segment. Over 255 to 269 (SEYRHALESDIEPFK) the chain is Cytoplasmic. Residues 270–290 (GLLLGLFFIGVGMSIDFGTLV) traverse the membrane as a helical segment. The Periplasmic segment spans residues 291–293 (ENP). The chain crosses the membrane as a helical span at residues 294 to 314 (LRILLLLAGFLAIKIVMLWLV). The Cytoplasmic portion of the chain corresponds to 315–326 (ARTLGVPAKQRR). A helical transmembrane segment spans residues 327–347 (WFAVLLGQGSEFAFVVFGAAQ). At 348–358 (MADVLEPEWAK) the chain is on the periplasmic side. Residues 359 to 379 (ALTLAVALSMAATPIFLVLLT) form a helical membrane-spanning segment. Residues 380–620 (RMEKTATGEA…ADEPEVKPSI (241 aa)) are Cytoplasmic-facing. The RCK N-terminal domain occupies 399-518 (QPRVIVAGFG…AGVAMPERET (120 aa)). Residues 599–620 (QGTAEGKHSGKAADEPEVKPSI) are disordered. Over residues 603–620 (EGKHSGKAADEPEVKPSI) the composition is skewed to basic and acidic residues.

It belongs to the monovalent cation:proton antiporter 2 (CPA2) transporter (TC 2.A.37) family. KefC subfamily. Homodimer. Interacts with the regulatory subunit KefF.

It localises to the cell inner membrane. Functionally, pore-forming subunit of a potassium efflux system that confers protection against electrophiles. Catalyzes K(+)/H(+) antiport. The chain is Glutathione-regulated potassium-efflux system protein KefC from Salmonella typhi.